A 679-amino-acid polypeptide reads, in one-letter code: Protein asunder (679 aa).

Residues 519 to 541 (RLKVNKTKDQYRLFYRELEQLIQ) are a coiled coil. Positions 564-610 (GDASNKSDPSAAHLRSYTESPLSPERLEPTNSVNSSSSSILKASKRR) are disordered. Residues 604–610 (LKASKRR) carry the Nuclear localization signal (NLS) motif.

The protein belongs to the Integrator subunit 13 family. As to quaternary structure, belongs to the multiprotein complex Integrator, at least composed of IntS1, IntS2, IntS3, IntS4, omd/IntS5, IntS6, defl/IntS7, IntS8, IntS9, IntS10, IntS11, IntS12, asun/IntS13, IntS14 and IntS15. The core complex associates with protein phosphatase 2A subunits mts/PP2A and Pp2A-29B, to form the Integrator-PP2A (INTAC) complex. Phosphorylated.

It is found in the nucleus. The protein localises to the cytoplasm. It localises to the perinuclear region. Component of the integrator complex, a multiprotein complex that terminates RNA polymerase II (Pol II) transcription in the promoter-proximal region of genes. The integrator complex provides a quality checkpoint during transcription elongation by driving premature transcription termination of transcripts that are unfavorably configured for transcriptional elongation: the complex terminates transcription by (1) catalyzing dephosphorylation of the C-terminal domain (CTD) of Pol II subunit Polr2A/Rbp1 and Spt5, and (2) degrading the exiting nascent RNA transcript via endonuclease activity. The integrator complex is also involved in the 3'-end processing of the U7 snRNA, and also the spliceosomal snRNAs U1, U2, U4 and U5. The protein is Protein asunder (asun) of Drosophila mojavensis (Fruit fly).